Here is an 808-residue protein sequence, read N- to C-terminus: Potassium transporter 5 (808 aa).

Residues 1 to 65 (MAEEVGETRG…NQVNWKKTLS (65 aa)) are Cytoplasmic-facing. A helical transmembrane segment spans residues 66-86 (LTFQSIGVVYGDIGTSPLYVY). Residues 87–102 (ESTFPDKIGSKEDILG) are Extracellular-facing. Residues 103-123 (VLSLIIYTLVLLPMLKYVFIV) traverse the membrane as a helical segment. The Cytoplasmic portion of the chain corresponds to 124-189 (LRANDNGDGG…EKMENSKNIK (66 aa)). The chain crosses the membrane as a helical span at residues 190 to 210 (ILLFLVTILGTSMVIGDGVLT). Residues 211 to 221 (PCISVLSAVSG) lie on the Extracellular side of the membrane. A helical transmembrane segment spans residues 222–242 (IGSLGQDAVVGISIAILIVLF). Over 243-251 (CAQRLGTDK) the chain is Cytoplasmic. The chain crosses the membrane as a helical span at residues 252–272 (VGFSFAPIILLWFSFIGGIGL). The Extracellular segment spans residues 273–302 (YNLFKYDVSVLRAFNPKYMFDYFKRNGKQG). Residues 303–323 (WISLGGVVLAVTGTEAMFADL) form a helical membrane-spanning segment. Residues 324–327 (GHFN) lie on the Cytoplasmic side of the membrane. A helical membrane pass occupies residues 328–348 (VQAIQISFSGIVFPALLCAYA). Residues 349 to 379 (GQAAYLTKFPDDVSKTFYKSIPDPLYWPTFV) are Extracellular-facing. The helical transmembrane segment at 380–400 (VAVAAAIIASQAMISGAFAII) threads the bilayer. The Cytoplasmic segment spans residues 401-424 (SQSLSLGCFPRVKVIHTSAKYEGQ). The helical transmembrane segment at 425 to 445 (VYIPEVNYILMIACIMVCLGF) threads the bilayer. Residues 446-456 (KTTEKIGNAYG) are Extracellular-facing. Residues 457–477 (IAVVAVMVITTCMVTIIMLVV) traverse the membrane as a helical segment. The Cytoplasmic segment spans residues 478–482 (WRTKM). A helical membrane pass occupies residues 483-503 (IWIAFFFFGFICIEAVYLSSV). Residues 504 to 510 (LYKFKDG) are Extracellular-facing. A helical transmembrane segment spans residues 511 to 531 (GFLPLAFSFFLMIIMGIWHYI). At 532-808 (HKERYMYELK…LLRVGMTYEI (277 aa)) the chain is on the cytoplasmic side. The interval 699-722 (LQQPNPSRVSSGSIHSNSGIKSTK) is disordered.

The protein belongs to the HAK/KUP transporter (TC 2.A.72.3) family. Expressed in the roots.

The protein resides in the cell membrane. The catalysed reaction is K(+)(in) = K(+)(out). High-affinity potassium transporter that functions under low potassium conditions. Involved in the positive regulation of salt tolerance under salt stress. The protein is Potassium transporter 5 of Manihot esculenta (Cassava).